Here is a 795-residue protein sequence, read N- to C-terminus: Protein translocase subunit SecA 2 (795 aa).

Residues Gln84, 102-106 (GEGKT), and Asp496 each bind ATP.

It belongs to the SecA family. Monomer and homodimer. Part of the essential Sec protein translocation apparatus which comprises SecA, SecYEG and auxiliary proteins SecDF. Other proteins may also be involved.

It localises to the cell membrane. The protein localises to the cytoplasm. The enzyme catalyses ATP + H2O + cellular proteinSide 1 = ADP + phosphate + cellular proteinSide 2.. Its function is as follows. Part of the Sec protein translocase complex. Interacts with the SecYEG preprotein conducting channel. Has a central role in coupling the hydrolysis of ATP to the transfer of proteins into and across the cell membrane, serving as an ATP-driven molecular motor driving the stepwise translocation of polypeptide chains across the membrane. In Streptococcus agalactiae serotype III (strain NEM316), this protein is Protein translocase subunit SecA 2.